A 261-amino-acid polypeptide reads, in one-letter code: Cytochrome c oxidase subunit 3 (261 aa).

Over 1–15 the chain is Mitochondrial matrix; that stretch reads MTHQTHAYHMVNPSP. A helical transmembrane segment spans residues 16-34; sequence WPLTGALSALLMTSGLAMW. Residues 35 to 40 lie on the Mitochondrial intermembrane side of the membrane; that stretch reads FHYNSM. Residues 41–66 form a helical membrane-spanning segment; the sequence is LLLTLGLMTNLLTMYQWWRDIVREST. The Mitochondrial matrix segment spans residues 67 to 72; the sequence is FQGHHT. The helical transmembrane segment at 73-105 threads the bilayer; that stretch reads LVVQKGLRYGMILFIISEVFFFSGFFWAFYHSS. Residues 106-128 are Mitochondrial intermembrane-facing; the sequence is LAPTPELGGCWPPTGIHPLNPME. Residues 129-152 traverse the membrane as a helical segment; the sequence is VPLLNTSVLLASGVSITWAHHSLM. The Mitochondrial matrix portion of the chain corresponds to 153–155; that stretch reads EGN. The helical transmembrane segment at 156-183 threads the bilayer; sequence RKHMLQALFITISLGVYFTLLQASEYYE. Topologically, residues 184-190 are mitochondrial intermembrane; that stretch reads APFTISD. A helical membrane pass occupies residues 191-223; that stretch reads GIYGSTFFVATGFHGLHVIIGSTFLIVCFLRQL. Residues 224-232 are Mitochondrial matrix-facing; it reads KFHFTSNHH. Residues 233-256 form a helical membrane-spanning segment; the sequence is FGFEAAAWYWHFVDVVWLFLYVSI. Over 257–261 the chain is Mitochondrial intermembrane; sequence YWWGS.

The protein belongs to the cytochrome c oxidase subunit 3 family. As to quaternary structure, component of the cytochrome c oxidase (complex IV, CIV), a multisubunit enzyme composed of 14 subunits. The complex is composed of a catalytic core of 3 subunits MT-CO1, MT-CO2 and MT-CO3, encoded in the mitochondrial DNA, and 11 supernumerary subunits COX4I, COX5A, COX5B, COX6A, COX6B, COX6C, COX7A, COX7B, COX7C, COX8 and NDUFA4, which are encoded in the nuclear genome. The complex exists as a monomer or a dimer and forms supercomplexes (SCs) in the inner mitochondrial membrane with NADH-ubiquinone oxidoreductase (complex I, CI) and ubiquinol-cytochrome c oxidoreductase (cytochrome b-c1 complex, complex III, CIII), resulting in different assemblies (supercomplex SCI(1)III(2)IV(1) and megacomplex MCI(2)III(2)IV(2)).

It is found in the mitochondrion inner membrane. It catalyses the reaction 4 Fe(II)-[cytochrome c] + O2 + 8 H(+)(in) = 4 Fe(III)-[cytochrome c] + 2 H2O + 4 H(+)(out). Functionally, component of the cytochrome c oxidase, the last enzyme in the mitochondrial electron transport chain which drives oxidative phosphorylation. The respiratory chain contains 3 multisubunit complexes succinate dehydrogenase (complex II, CII), ubiquinol-cytochrome c oxidoreductase (cytochrome b-c1 complex, complex III, CIII) and cytochrome c oxidase (complex IV, CIV), that cooperate to transfer electrons derived from NADH and succinate to molecular oxygen, creating an electrochemical gradient over the inner membrane that drives transmembrane transport and the ATP synthase. Cytochrome c oxidase is the component of the respiratory chain that catalyzes the reduction of oxygen to water. Electrons originating from reduced cytochrome c in the intermembrane space (IMS) are transferred via the dinuclear copper A center (CU(A)) of subunit 2 and heme A of subunit 1 to the active site in subunit 1, a binuclear center (BNC) formed by heme A3 and copper B (CU(B)). The BNC reduces molecular oxygen to 2 water molecules using 4 electrons from cytochrome c in the IMS and 4 protons from the mitochondrial matrix. This chain is Cytochrome c oxidase subunit 3 (MT-CO3), found in Ceratotherium simum (White rhinoceros).